Here is a 73-residue protein sequence, read N- to C-terminus: UPF0235 protein SYO3AOP1_0257 (73 aa).

This sequence belongs to the UPF0235 family.

In Sulfurihydrogenibium sp. (strain YO3AOP1), this protein is UPF0235 protein SYO3AOP1_0257.